Consider the following 42-residue polypeptide: Crotamine-IV-2 (42 aa).

Intrachain disulfides connect Cys4/Cys37, Cys11/Cys31, and Cys19/Cys38.

This sequence belongs to the crotamine-myotoxin family. In terms of assembly, monomer. In terms of tissue distribution, expressed by the venom gland.

Its subcellular location is the secreted. In terms of biological role, cationic peptide that possesses multiple functions. It acts as a cell-penetrating peptide (CPP), and as a potent voltage-gated potassium channel (Kv) inhibitor. It exhibits antimicrobial activities, and hind limb paralysis. It also induces potent blockade of neuromuscular transmission in young chicken biventer cervicis preparation and potent myotoxic effect. In vivo, induces myonecrosis, upon intramuscular or subcutaneous injections into mice. In Crotalus durissus cumanensis (South American rattlesnake), this protein is Crotamine-IV-2.